Reading from the N-terminus, the 711-residue chain is MNATHRGAQADASAPAGGLPPATAAERVQWLRDELDRHNYQYYVLDAPTIPDAEYDALFTELQALEAEHPELLTPDSPTQRVGGAPLSAFDTVRHRVPMLSLNNGFSDEDVTGFDRRCAQGLGRSAAAGGEQDLFSAAEGVEYACELKFDGLAMSLRYEDGRLVQAATRGDGETGEDVTVNVRTIKAIPLKLRGAAPAVLEVRGEVFMYRRDFDKLNARQAEAGDKTFVNPRNAAAGSLRQLDPRITAKRPLSFFAYGLGELQGIERPATHSAMLDGFATMGLPVCNERAVVKGAQGLLDFYRKVGEKRDQLPYDIDGVVYKVNALAEQEQLGFVSRAPRFALAHKFPAQEMTTIVEDIEVQVGRTGAITPVARLQPVFVGGVTVTNATLHNEDEVRRKDVHIGDTVIVRRAGDVIPEVVAVVLERRPDDARAFVMPTACPVCGSHIERLEDEAIARCTGGLICAAQRKQALLHFAQRRAMDIEGLGDKVVEQLVDQGIVRTPADLYKLGVAKLAALDRMADKSAGNLVAAIEASRSTTFNRFIFSLGIRHVGEATAKDLARHFGKLDGLMVADEAALLEVNDVGPVVAQSIVNFFGEPHNVEVIEQLRAAGVHWPESEPVARAPAPLAGKTFVLTGTLPSLSREAAKEMLEAAGAKVAGSVSKKTDYVVAGAEAGSKLDKAEALGVPVLDEAGMLALLESVGAGQPGEQS.

A disordered region spans residues 1–21 (MNATHRGAQADASAPAGGLPP). A compositionally biased stretch (low complexity) spans 10 to 21 (ADASAPAGGLPP). Residues 52–56 (DAEYD), 101–102 (SL), and Glu146 each bind NAD(+). The active-site N6-AMP-lysine intermediate is Lys148. The NAD(+) site is built by Arg169, Glu205, Lys322, and Lys346. Residues Cys440, Cys443, Cys458, and Cys464 each contribute to the Zn(2+) site. A BRCT domain is found at 623–711 (RAPAPLAGKT…VGAGQPGEQS (89 aa)).

This sequence belongs to the NAD-dependent DNA ligase family. LigA subfamily. Requires Mg(2+) as cofactor. It depends on Mn(2+) as a cofactor.

The catalysed reaction is NAD(+) + (deoxyribonucleotide)n-3'-hydroxyl + 5'-phospho-(deoxyribonucleotide)m = (deoxyribonucleotide)n+m + AMP + beta-nicotinamide D-nucleotide.. In terms of biological role, DNA ligase that catalyzes the formation of phosphodiester linkages between 5'-phosphoryl and 3'-hydroxyl groups in double-stranded DNA using NAD as a coenzyme and as the energy source for the reaction. It is essential for DNA replication and repair of damaged DNA. This is DNA ligase from Cupriavidus pinatubonensis (strain JMP 134 / LMG 1197) (Cupriavidus necator (strain JMP 134)).